Here is a 440-residue protein sequence, read N- to C-terminus: MSYATKIHARYVYDSRGNPTVEVDFTTDKGLFRSIVPSGASTGVHEALELRDGDKSKWLGKGVLKAVANVNDIIAPALIKAKIDVVDQAKIDEFLLSLDGTPNKSKLGANAILGVSLAAANAAAAAQGIPLYKHIANISNAKKGKFVLPVPFQNVLNGGSHAGGALAFQEFMIAPTGVSTFSEALRIGSEVYHNLKSLTKKKYGQSAGNVGDEGGVAPDIKTPKEALDLIMDAIDKAGYKGKVGIAMDVASSEFYKDGKYDLDFKNPESDPSKWLSGPQLADLYEQLISEYPIVSIEDPFAEDDWDAWVHFFERVGDKIQIVGDDLTVTNPTRIKTAIEKKAANALLLKVNQIGTLTESIQAANDSYAAGWGVMVSHRSGETEDTFIADLSVGLRSGQIKTGAPARSERLAKLNQILRIEEELGSEAIYAGKDFQKASQL.

The substrate site is built by histidine 161 and glutamate 170. Catalysis depends on glutamate 213, which acts as the Proton donor. Residues aspartate 248, glutamate 297, and aspartate 324 each contribute to the Mg(2+) site. Substrate is bound by residues glutamate 297 and aspartate 324. Lysine 349 acts as the Proton acceptor in catalysis. Substrate is bound by residues 376-379 and lysine 400; that span reads SHRS.

This sequence belongs to the enolase family. In terms of assembly, homodimer. It depends on Mg(2+) as a cofactor.

Its subcellular location is the cytoplasm. It catalyses the reaction (2R)-2-phosphoglycerate = phosphoenolpyruvate + H2O. Its pathway is carbohydrate degradation; glycolysis; pyruvate from D-glyceraldehyde 3-phosphate: step 4/5. This Candida albicans (strain SC5314 / ATCC MYA-2876) (Yeast) protein is Enolase 1 (ENO1).